Consider the following 451-residue polypeptide: MLEAPSYLVSRDLPSSCEEESKWIYNAHCVLQLSLRKRLLDDTDVEGSSAKKMLRVDHGSRGESDKITDSLQLAKTYQSSNQSQQGGGGDQQSSPVTRLDQNALLNCLAHCSLSDFGSIASTNRTFRSLIKDSELYRLRRAKGIVEHWIYFSCRLLEWEAYDPNGDRWLRVPKMTFNECFMCSDKESLAVGTELLVFGKEIMSHVIYRYSILTNTWTSGMQMNVPRCLFGSASLGEIAVIAGGCDPRGRILSSAELYNSETGEWTVIPSMNKARKMCSSVFMDGNFYCIGGIGEGNSKMLLCGEVYDLKKKTWTLIPNMLPERSSGGGGDQAKEIAAATAASEAPPLVAVVKDELYAANYAQQEVKKYDKRLNVWNKVGNLPERASSMNGWGMAFRACGDQLVVVGGPRAIGGGFIEINACVPSEGTQLHWRVLASKPSGNFVYNCAVMGC.

Residues 93-139 (SSPVTRLDQNALLNCLAHCSLSDFGSIASTNRTFRSLIKDSELYRLR) enclose the F-box domain. 5 Kelch repeats span residues 137 to 188 (RLRR…KESL), 193 to 236 (ELLV…SLGE), 237 to 284 (IAVI…FMDG), 286 to 333 (FYCI…DQAK), and 349 to 395 (AVVK…GMAF).

The sequence is that of F-box/kelch-repeat protein At1g74510 from Arabidopsis thaliana (Mouse-ear cress).